Reading from the N-terminus, the 499-residue chain is Pyruvate kinase 2 (499 aa).

Arg-50 lines the substrate pocket. The K(+) site is built by Asn-52, Ser-54, Asp-84, and Thr-85. 52 to 55 (NFSH) contacts ATP. Arg-91 is a binding site for ATP. Glu-241 provides a ligand contact to Mg(2+). Substrate is bound by residues Gly-264, Asp-265, and Thr-297. A Mg(2+)-binding site is contributed by Asp-265.

The protein belongs to the pyruvate kinase family. Homotetramer. Mg(2+) is required as a cofactor. The cofactor is K(+).

It carries out the reaction pyruvate + ATP = phosphoenolpyruvate + ADP + H(+). It participates in carbohydrate degradation; glycolysis; pyruvate from D-glyceraldehyde 3-phosphate: step 5/5. Activated by fructose 2,6-bisphosphate, activated by the effector in a cooperative manner. This Trypanosoma brucei brucei protein is Pyruvate kinase 2 (PYK2).